The sequence spans 1340 residues: MWQFIRSRILTVIIFIGAAHGLLVVGPKFIRANQEYTLVISNFNSQLSKVDLLLKLEGETDNGLSVLNVTKMVDVRRNMNRMINFNMPEELTAGNYKITIDGQRGFSFHKEAELVYLSKSISGLIQVDKPVFKPGDTVNFRVILLDTELKPPARVKSVYVTIRDPQRNVIRKWSTAKLYAGVFESDLQIVPTPMLGVWNISVEVEGEELVSKTFEVKEYVLSTFDVQVMPSVIPLEEHQAVNLTIEANYHFGKPVQGVAKVELYLDDDKLNQKKELTVYGKGQVELRFDNFAMDADQQDVRVKVSFIEQYTNRTVVKQSQITVYRYAYRVELIKESPQFRPGLPFKCALQFTHHDGTPAKGITGKVEVSDVGFETTTTSDNDGLIKLELQPSEGTEQLGINFNAVDGFFFYEDVNKVETVTDAYIKLELKSPIKRNKLMRFMVTCTERMTFFVYYVMSKGNIIDAGFMRPNKQTKYLLQLNATEKMIPKAKILIATVAGRTVVYDYADLDFQELRNNFDLSIDEQEIKPGRQIELSMSGRPGAYVGLAAYDKALLLFNKNHDLFWEDIGQVFDGFHAINENEFDIFHSLGLFARTLDDILFDSANEKTGRNALQSGKPIGKLVSYRTNFQESWLWKNVSIGRSGSRKLIEVVPDTTTSWYLTGFSIDPVYGLGIIKKPIQFTTVQPFYIVENLPYSIKRGEAVVLQFTLFNNLGAEYIADVTLYNVANQTEFVGRPDTDLSYTKSVSVPPKVGVPISFLIKARKLGEMAVRVKASIMLGHETDALEKVIRVMPESLAQPKMDTSFFCFDDYKNQTFPFNLDINKKADNGSKKIEFRLNPNLLTMVIKNLDNLLAVPTGCGEQNMVKFVPNILVLDYLYATGSKEQHLIDKATNLLRQGYQNQMRYRQTDGSFGVWEKSGSSVFLTAFVATSMQTASKYMNDIDAAMVEKALDWLASKQHSSGRFDETGKVWHKDMQGGLRNGVALTSYVLTALLENDIAKVKHAVVIQNGMNYLSNQLAFINNPYDLSIATYAMMLNGHTMKKEALDKLIDMSISDNNKKERYWGTTNQIETTAYALLSFVMAEKYLDGIPVMNWLVNQRYVTGSFPRTQDTFVGLKALTKLAEKISPSRNDYTVQLKYKKNTKYFNINSEQIDVQNFLEIPEDTKKLEINVGGIGFGLLEVIYQFDLNLVNFEHRFKLDLEKQNTGSDYELRLRVCANYIPELTDSQSNMALIEVTLPSGYVVDRNPISEQTTVNPIQNMEIRYGGTSVVLYYYKMGTERNCFTVTAYRRFKVALKRPAYVVVYDYYNTNLNAIKVYEVDKQNVCEICEEEDCPAECKK.

The first 21 residues, 1–21 (MWQFIRSRILTVIIFIGAAHG), serve as a signal peptide directing secretion. N-linked (GlcNAc...) asparagine glycosylation is found at Asn-68, Asn-199, Asn-242, Asn-312, and Asn-481. The interval 580–609 (ENEFDIFHSLGLFARTLDDILFDSANEKTG) is may contain the cleavage site. 4 N-linked (GlcNAc...) asparagine glycosylation sites follow: Asn-637, Asn-728, Asn-813, and Asn-828. The isoglutamyl cysteine thioester (Cys-Gln) cross-link spans 859-862 (CGEQ). Disulfide bonds link Cys-1217/Cys-1283, Cys-1326/Cys-1338, and Cys-1329/Cys-1334.

In terms of assembly, heterodimer of a TEP1-N chain and an TEP1-C chain non-covalently linked. Forms a complex composed of TEP1-N and TEP1-C heterodimer, LRIM1 and APL1C; the interaction stabilizes TEP1-N and TEP1-C heterodimer, prevents its binding to tissues while circulating in the hemolymph and protects the thioester bond from hydrolysis. Mature TEP1 and to a lesser extent full-length TEP1 interact with SPCLIP1; the interaction is induced by microbial infection. Post-translationally, in the hemolymph, the full-length protein is cleaved by an unknow protease into a 75kDa N-terminal (TEP1-N) chain and an 80kDa C-terminal (TEP1-C) chain which remain non-covalently linked. The TEP1-C chain contains the thioester bond which covalently binds to the pathogen surface. Cleavage is induced by bacterial infection or aseptic wound injury. During embryonic and pupal development, the cleaved form is the predominant form. N-glycosylated. As to expression, specifically expressed in hemocytes (at protein level).

The protein resides in the secreted. Plays an essential role in the innate immune response to bacteria and protozoa infection. After proteolytic cleavage, the protein C-terminus binds covalently through a thioester bond to the pathogen surface resulting in pathogen clearance either by melanization or lysis. Initiate the recruitment and activation of a cascade of proteases, mostly of CLIP-domain serine proteases, which leads to the proteolytic cleavage of the prophenoloxidase (PPO) into active phenoloxidase (PO), the rate-limiting enzyme in melanin biosynthesis. In response to parasite P.berghei-mediated infection, binds to and mediates killing of ookinetes, as they egress from midgut epithelial cells into the basal labyrinth, by both lysis and melanization. During bacterial infection, binds to both Gram-positive and Gram-negative bacteria but only promotes phagocytosis of Gram-negative bacteria. Promotes the accumulation of SPCLIP1 onto the surface of P.berghei ookinetes and bacterium E.coli which leads to the melanization of the pathogen. Recruits CLIPA2 to bacteria surface. In response to bacterial infection, required for periostial hemocyte aggregation, but not for the aggregation of sessile hemocytes in non-periostial regions. During the late stage of fungus B.bassiana-mediated infection, required for the initiation of hyphae melanization by binding to the surface of hyphae and recruiting prophenoloxidase PPO to them. Plays a role in male fertility by binding to defective sperm cells and promoting their removal during spermatogenesis. Functionally, binds covalently through a thioester bond to the pathogen surface resulting in pathogen clearance. This chain is Thioester-containing protein 1 allele S1, found in Anopheles gambiae (African malaria mosquito).